The sequence spans 809 residues: Sucrose synthase 4 (809 aa).

The GT-B glycosyltransferase stretch occupies residues 275 to 753 (MIFNVVVVSP…GLQRIYEKYT (479 aa)).

The protein belongs to the glycosyltransferase 1 family. Plant sucrose synthase subfamily. Predominantly expressed in the leaf tissues and in caryopses.

It carries out the reaction an NDP-alpha-D-glucose + D-fructose = a ribonucleoside 5'-diphosphate + sucrose + H(+). Functionally, sucrose-cleaving enzyme that provides UDP-glucose and fructose for various metabolic pathways. The chain is Sucrose synthase 4 (SUS4) from Oryza sativa subsp. japonica (Rice).